Reading from the N-terminus, the 332-residue chain is Aspartate carbamoyltransferase catalytic subunit (332 aa).

Residues Arg78 and Thr79 each coordinate carbamoyl phosphate. Residue Lys106 participates in L-aspartate binding. Residues Arg128, His156, and Gln159 each contribute to the carbamoyl phosphate site. Positions 189 and 243 each coordinate L-aspartate. 2 residues coordinate carbamoyl phosphate: Gly284 and Pro285.

Belongs to the aspartate/ornithine carbamoyltransferase superfamily. ATCase family. Heterododecamer (2C3:3R2) of six catalytic PyrB chains organized as two trimers (C3), and six regulatory PyrI chains organized as three dimers (R2).

It carries out the reaction carbamoyl phosphate + L-aspartate = N-carbamoyl-L-aspartate + phosphate + H(+). It participates in pyrimidine metabolism; UMP biosynthesis via de novo pathway; (S)-dihydroorotate from bicarbonate: step 2/3. Catalyzes the condensation of carbamoyl phosphate and aspartate to form carbamoyl aspartate and inorganic phosphate, the committed step in the de novo pyrimidine nucleotide biosynthesis pathway. This chain is Aspartate carbamoyltransferase catalytic subunit, found in Caulobacter vibrioides (strain ATCC 19089 / CIP 103742 / CB 15) (Caulobacter crescentus).